The primary structure comprises 292 residues: High-affinity heme uptake system protein IsdE (292 aa).

A signal peptide spans 1–19 (MRIIKYLTILVISVVILTS). Cys20 carries the N-palmitoyl cysteine lipid modification. Cys20 carries S-diacylglycerol cysteine lipidation. One can recognise a Fe/B12 periplasmic-binding domain in the interval 35-291 (RIVPTTVALT…QLYDLFYKDK (257 aa)). Heme contacts are provided by Val41, Ala42, Ser60, Tyr61, Met78, and His229.

Belongs to the bacterial solute-binding protein 8 family. It depends on heme b as a cofactor.

It is found in the cell membrane. In terms of biological role, involved in heme (porphyrin) scavenging. Binds Fe(2+) and Fe(3+) heme but the largest fraction is Fe(2+) heme. Functions as a high-affinity heme binding protein and probably has a role in relaying heme-iron from cell wall-anchored isd proteins receptors to the probable permease IsdF. In Staphylococcus aureus (strain Mu3 / ATCC 700698), this protein is High-affinity heme uptake system protein IsdE (isdE).